The chain runs to 197 residues: MIFSISKRKLICGFSLVALTIAGIVGGVYLVTKNNQQTTPQTNHFNVADPVNKVPNWRKLGPETQRELRDLLYPLDDTGYFIYKYGAISRYLQSQKELDELVDYRTVLPSTQKHFKYDSFNQSVLESKLRKWLMKAIKQHPYFQHFEFDPVLKAQYNINIPAQKITVNAVWFYKKDNDLTTGKPIRYWDQFEIKLKQ.

Residues 11-31 (ICGFSLVALTIAGIVGGVYLV) traverse the membrane as a helical segment.

It is found in the membrane. This is an uncharacterized protein from Mycoplasma pneumoniae (strain ATCC 29342 / M129 / Subtype 1) (Mycoplasmoides pneumoniae).